Consider the following 401-residue polypeptide: NADH-dependent flavin oxidoreductase iliE (401 aa).

FMN contacts are provided by residues 25–28 and glutamine 107; that span reads ASMS. Residue 188-191 participates in substrate binding; it reads HAAH. 346–347 provides a ligand contact to FMN; that stretch reads AR.

The protein belongs to the NADH:flavin oxidoreductase/NADH oxidase family.

NADH-dependent flavin oxidoreductase; part of the gene cluster that mediates the biosynthesis of ilicicolin H, a 4-hydroxy-2-pyridonealkaloid that has potent and broad antifungal activities by inhibiting the mitochondrial respiration chain. The biosynthesis of ilicicolin H starts with formation of the tetramic acid by the hybrid PKS-NRPS synthetase iliA with the partnering trans-enoyl reductase iliB since iliA lacks a designated enoylreductase (ER) domain. The cytochrome P450 monooxygenase iliC then catalyzes the ring expansion of the tetramate to the acyclic 2-pyridone. The pericyclase iliD further converts the acyclic 2-pyridone into 8-epi-ilicicolin H. 8-epi-ilicicolin H might then spontaneously convert to ilicicolin H since ilicicolin H is produced in the absence of the epimerase iliE, in contrast to what was observed for the Talaromyces variabilis ilicolin H biosynthetic pathway. This chain is NADH-dependent flavin oxidoreductase iliE, found in Hypocrea jecorina (strain QM6a) (Trichoderma reesei).